The primary structure comprises 436 residues: GTPase Der (436 aa).

2 EngA-type G domains span residues 4-167 and 175-351; these read PVVA…PKDA and IKFS…DNHE. GTP-binding positions include 10–17, 57–61, 119–122, 181–188, 229–233, and 294–297; these read GRPNVGKS, DTGGI, NKVD, DTAGI, and NKWD. One can recognise a KH-like domain in the interval 352–436; sequence QRISSAVLND…PIHIIERRRK (85 aa).

The protein belongs to the TRAFAC class TrmE-Era-EngA-EngB-Septin-like GTPase superfamily. EngA (Der) GTPase family. In terms of assembly, associates with the 50S ribosomal subunit.

Its function is as follows. GTPase that plays an essential role in the late steps of ribosome biogenesis. In Ligilactobacillus salivarius (strain UCC118) (Lactobacillus salivarius), this protein is GTPase Der.